Here is a 292-residue protein sequence, read N- to C-terminus: Glutathione S-transferase L2, chloroplastic (292 aa).

Residues 1-56 (MSVGLKVSAFLHPTLALSSRDVSLSSSSSSLYLDRKILRPGSGRRWCKSRRTEPIL) constitute a chloroplast transit peptide. Residues 79 to 160 (GSTRLYISYT…YIDTNFEGPS (82 aa)) enclose the GST N-terminal domain. Residues 89–90 (CP), 117–118 (NR), 131–132 (KV), and 144–145 (ES) each bind glutathione. Residues 130 to 286 (NKVPALEHNN…ELVERYKRRV (157 aa)) form the GST C-terminal domain.

The protein belongs to the GST superfamily. Lambda family.

The protein localises to the plastid. It localises to the chloroplast. It carries out the reaction RX + glutathione = an S-substituted glutathione + a halide anion + H(+). In terms of biological role, catalyzes the glutathione-dependent reduction of S-glutathionylquercetin to quercetin. In vitro, possesses glutathione-dependent thiol transferase activity toward 2-hydroxyethyl disulfide (HED). The sequence is that of Glutathione S-transferase L2, chloroplastic (GSTL2) from Arabidopsis thaliana (Mouse-ear cress).